Consider the following 404-residue polypeptide: Sodium/glutamate symporter (404 aa).

A run of 11 helical transmembrane segments spans residues Phe5–Val25, Thr33–Trp53, Thr69–Ile89, Leu95–Ala115, Ile161–Ala181, Ser219–Val239, Ala245–Leu265, Ala277–Leu297, Ile307–Ile327, Ala338–Ala358, and Ala373–Leu393.

The protein belongs to the glutamate:Na(+) symporter (ESS) (TC 2.A.27) family.

Its subcellular location is the cell inner membrane. In terms of biological role, catalyzes the sodium-dependent transport of glutamate. The chain is Sodium/glutamate symporter from Haemophilus influenzae (strain ATCC 51907 / DSM 11121 / KW20 / Rd).